Consider the following 303-residue polypeptide: Sulfate adenylyltransferase subunit 2 (303 aa).

Belongs to the PAPS reductase family. CysD subfamily. Heterodimer composed of CysD, the smaller subunit, and CysN.

The enzyme catalyses sulfate + ATP + H(+) = adenosine 5'-phosphosulfate + diphosphate. The protein operates within sulfur metabolism; hydrogen sulfide biosynthesis; sulfite from sulfate: step 1/3. Functionally, with CysN forms the ATP sulfurylase (ATPS) that catalyzes the adenylation of sulfate producing adenosine 5'-phosphosulfate (APS) and diphosphate, the first enzymatic step in sulfur assimilation pathway. APS synthesis involves the formation of a high-energy phosphoric-sulfuric acid anhydride bond driven by GTP hydrolysis by CysN coupled to ATP hydrolysis by CysD. The protein is Sulfate adenylyltransferase subunit 2 of Sulfurimonas denitrificans (strain ATCC 33889 / DSM 1251) (Thiomicrospira denitrificans (strain ATCC 33889 / DSM 1251)).